Consider the following 168-residue polypeptide: Probable chorismate pyruvate-lyase (168 aa).

3 residues coordinate substrate: R75, I114, and E155.

Belongs to the UbiC family.

It is found in the cytoplasm. The catalysed reaction is chorismate = 4-hydroxybenzoate + pyruvate. It functions in the pathway cofactor biosynthesis; ubiquinone biosynthesis. In terms of biological role, removes the pyruvyl group from chorismate, with concomitant aromatization of the ring, to provide 4-hydroxybenzoate (4HB) for the ubiquinone pathway. In Psychrobacter arcticus (strain DSM 17307 / VKM B-2377 / 273-4), this protein is Probable chorismate pyruvate-lyase.